We begin with the raw amino-acid sequence, 422 residues long: L-2-hydroxyglutarate dehydrogenase (422 aa).

It belongs to the L2HGDH family. The cofactor is FAD.

It localises to the cell inner membrane. It carries out the reaction (S)-2-hydroxyglutarate + a quinone = a quinol + 2-oxoglutarate. Its pathway is amino-acid degradation. In terms of biological role, catalyzes the dehydrogenation of L-2-hydroxyglutarate (L2HG) to alpha-ketoglutarate and couples to the respiratory chain by feeding electrons from the reaction into the membrane quinone pool. Functions in a L-lysine degradation pathway that proceeds via cadaverine, glutarate and L-2-hydroxyglutarate. The sequence is that of L-2-hydroxyglutarate dehydrogenase from Escherichia coli (strain K12).